The chain runs to 63 residues: uncharacterized protein (63 aa).

The helical transmembrane segment at 20-40 (IVLLISFIFFFGRFIYSSVGA) threads the bilayer.

The protein resides in the membrane. This is an uncharacterized protein from Escherichia coli O157:H7.